A 135-amino-acid polypeptide reads, in one-letter code: Putative pre-16S rRNA nuclease (135 aa).

The protein belongs to the YqgF nuclease family.

The protein localises to the cytoplasm. Could be a nuclease involved in processing of the 5'-end of pre-16S rRNA. In Buchnera aphidicola subsp. Acyrthosiphon pisum (strain 5A), this protein is Putative pre-16S rRNA nuclease.